We begin with the raw amino-acid sequence, 257 residues long: 3-deoxy-manno-octulosonate cytidylyltransferase (257 aa).

This sequence belongs to the KdsB family.

It localises to the cytoplasm. The enzyme catalyses 3-deoxy-alpha-D-manno-oct-2-ulosonate + CTP = CMP-3-deoxy-beta-D-manno-octulosonate + diphosphate. It participates in nucleotide-sugar biosynthesis; CMP-3-deoxy-D-manno-octulosonate biosynthesis; CMP-3-deoxy-D-manno-octulosonate from 3-deoxy-D-manno-octulosonate and CTP: step 1/1. The protein operates within bacterial outer membrane biogenesis; lipopolysaccharide biosynthesis. In terms of biological role, activates KDO (a required 8-carbon sugar) for incorporation into bacterial lipopolysaccharide in Gram-negative bacteria. This is 3-deoxy-manno-octulosonate cytidylyltransferase from Rhodospirillum centenum (strain ATCC 51521 / SW).